A 370-amino-acid chain; its full sequence is Cobalt-precorrin-5B C(1)-methyltransferase (370 aa).

The protein belongs to the CbiD family.

The enzyme catalyses Co-precorrin-5B + S-adenosyl-L-methionine = Co-precorrin-6A + S-adenosyl-L-homocysteine. Its pathway is cofactor biosynthesis; adenosylcobalamin biosynthesis; cob(II)yrinate a,c-diamide from sirohydrochlorin (anaerobic route): step 6/10. Catalyzes the methylation of C-1 in cobalt-precorrin-5B to form cobalt-precorrin-6A. The protein is Cobalt-precorrin-5B C(1)-methyltransferase of Prochlorococcus marinus (strain MIT 9215).